A 94-amino-acid chain; its full sequence is Phosphoribosyl-ATP pyrophosphatase (94 aa).

Belongs to the PRA-PH family.

It is found in the cytoplasm. It catalyses the reaction 1-(5-phospho-beta-D-ribosyl)-ATP + H2O = 1-(5-phospho-beta-D-ribosyl)-5'-AMP + diphosphate + H(+). The protein operates within amino-acid biosynthesis; L-histidine biosynthesis; L-histidine from 5-phospho-alpha-D-ribose 1-diphosphate: step 2/9. This Pyrobaculum calidifontis (strain DSM 21063 / JCM 11548 / VA1) protein is Phosphoribosyl-ATP pyrophosphatase.